A 335-amino-acid polypeptide reads, in one-letter code: Hsp90 co-chaperone Cdc37-like 1 (335 aa).

The span at 1–11 (MEQPWPPPGPW) shows a compositional bias: pro residues. A disordered region spans residues 1–42 (MEQPWPPPGPWSFPRTGGETEEESDLDVSPSSSHYSPVPDGG). The tract at residues 2–170 (EQPWPPPGPW…YEQKIRHFGM (169 aa)) is self-association. The span at 27–40 (DVSPSSSHYSPVPD) shows a compositional bias: low complexity. Phosphoserine occurs at positions 32 and 88. Positions 84 to 120 (HNSESLDQEHAKAQTAVSELRQREEEWRQKEEALVQR) form a coiled coil. The tract at residues 147–276 (KTEDEDKSQS…ARVRLYAQSQ (130 aa)) is self-association and interaction with Hsp90. Residues 266–335 (KARVRLYAQS…EDDDRMMDTV (70 aa)) form an interaction with Hsp70 region. The interval 277 to 335 (SFAPVTVENHAPHSGVGCIGSAEPLPQNPDSLQCCPPAPLCSVDSVVHKEDDDRMMDTV) is required for interaction with STIP1.

Belongs to the CDC37 family. As to quaternary structure, self-associates. Forms complexes with Hsp70 and Hsp90. Interacts with CDC37, FKBP4, PPID and STIP1.

Its subcellular location is the cytoplasm. Functionally, co-chaperone that binds to numerous proteins and promotes their interaction with Hsp70 and Hsp90. The polypeptide is Hsp90 co-chaperone Cdc37-like 1 (Cdc37l1) (Rattus norvegicus (Rat)).